We begin with the raw amino-acid sequence, 408 residues long: LL-diaminopimelate aminotransferase (408 aa).

Residues tyrosine 15 and glycine 42 each coordinate substrate. Pyridoxal 5'-phosphate contacts are provided by residues tyrosine 72, 108-109, tyrosine 132, asparagine 187, tyrosine 218, and 246-248; these read SK and SFS. Positions 109, 132, and 187 each coordinate substrate. An N6-(pyridoxal phosphate)lysine modification is found at lysine 249. Residues arginine 257 and asparagine 292 each coordinate pyridoxal 5'-phosphate. Asparagine 292 and arginine 388 together coordinate substrate.

The protein belongs to the class-I pyridoxal-phosphate-dependent aminotransferase family. LL-diaminopimelate aminotransferase subfamily. Homodimer. Pyridoxal 5'-phosphate is required as a cofactor.

The catalysed reaction is (2S,6S)-2,6-diaminopimelate + 2-oxoglutarate = (S)-2,3,4,5-tetrahydrodipicolinate + L-glutamate + H2O + H(+). The protein operates within amino-acid biosynthesis; L-lysine biosynthesis via DAP pathway; LL-2,6-diaminopimelate from (S)-tetrahydrodipicolinate (aminotransferase route): step 1/1. In terms of biological role, involved in the synthesis of meso-diaminopimelate (m-DAP or DL-DAP), required for both lysine and peptidoglycan biosynthesis. Catalyzes the direct conversion of tetrahydrodipicolinate to LL-diaminopimelate. The protein is LL-diaminopimelate aminotransferase of Synechococcus sp. (strain CC9902).